A 256-amino-acid polypeptide reads, in one-letter code: 5-oxoprolinase subunit A (256 aa).

The protein belongs to the LamB/PxpA family. Forms a complex composed of PxpA, PxpB and PxpC.

The catalysed reaction is 5-oxo-L-proline + ATP + 2 H2O = L-glutamate + ADP + phosphate + H(+). Functionally, catalyzes the cleavage of 5-oxoproline to form L-glutamate coupled to the hydrolysis of ATP to ADP and inorganic phosphate. The sequence is that of 5-oxoprolinase subunit A from Geobacillus thermodenitrificans (strain NG80-2).